The following is a 161-amino-acid chain: Nucleotide-binding protein GM21_0633 (161 aa).

It belongs to the YajQ family.

Nucleotide-binding protein. The chain is Nucleotide-binding protein GM21_0633 from Geobacter sp. (strain M21).